Here is a 132-residue protein sequence, read N- to C-terminus: Small ribosomal subunit protein uS8 (132 aa).

The protein belongs to the universal ribosomal protein uS8 family. In terms of assembly, part of the 30S ribosomal subunit. Contacts proteins S5 and S12.

Functionally, one of the primary rRNA binding proteins, it binds directly to 16S rRNA central domain where it helps coordinate assembly of the platform of the 30S subunit. This Roseiflexus castenholzii (strain DSM 13941 / HLO8) protein is Small ribosomal subunit protein uS8.